We begin with the raw amino-acid sequence, 287 residues long: Movement protein BC1 (287 aa).

It belongs to the begomovirus movement protein BC1 family. As to quaternary structure, binds to dimeric supercoiled plasmid DNA. Phosphorylated.

The protein resides in the host cell membrane. It localises to the host microsome membrane. It is found in the host endoplasmic reticulum membrane. Its function is as follows. Transports viral genome to neighboring plant cells directly through plasmosdesmata, without any budding. The movement protein allows efficient cell to cell propagation, by bypassing the host cell wall barrier. Begomovirus genome is shuttled out of nucleus by Nuclear shuttle protein (NSP) and the movement protein transports the DNA-NSP complex to cell plasmodesmata and facilitates further movement across the cell wall. The chain is Movement protein BC1 from Manihot esculenta (Cassava).